The following is a 176-amino-acid chain: ATP synthase subunit delta (176 aa).

Belongs to the ATPase delta chain family. In terms of assembly, F-type ATPases have 2 components, F(1) - the catalytic core - and F(0) - the membrane proton channel. F(1) has five subunits: alpha(3), beta(3), gamma(1), delta(1), epsilon(1). F(0) has three main subunits: a(1), b(2) and c(10-14). The alpha and beta chains form an alternating ring which encloses part of the gamma chain. F(1) is attached to F(0) by a central stalk formed by the gamma and epsilon chains, while a peripheral stalk is formed by the delta and b chains.

Its subcellular location is the cell membrane. Functionally, f(1)F(0) ATP synthase produces ATP from ADP in the presence of a proton or sodium gradient. F-type ATPases consist of two structural domains, F(1) containing the extramembraneous catalytic core and F(0) containing the membrane proton channel, linked together by a central stalk and a peripheral stalk. During catalysis, ATP synthesis in the catalytic domain of F(1) is coupled via a rotary mechanism of the central stalk subunits to proton translocation. This protein is part of the stalk that links CF(0) to CF(1). It either transmits conformational changes from CF(0) to CF(1) or is implicated in proton conduction. This Wigglesworthia glossinidia brevipalpis protein is ATP synthase subunit delta.